Consider the following 751-residue polypeptide: Photosystem I P700 chlorophyll a apoprotein A1 (751 aa).

The next 8 helical transmembrane spans lie at 73–96, 159–182, 198–222, 294–312, 349–372, 388–414, 435–457, and 532–550; these read IFSAHFGQLSVIFLWLSGMYFHGA, LYCTAIGGLAMAALMLFAGWFHYH, MNHHLAGLLGLGCLGWTGHQIHLSL, TAHHHLALAVLFLAAGHMY, WHAQLAINLAMMGSLSIIVAHHMY, LSLFTHHMWIGGFCIVGAGAHASIFMV, AIVSHLNWVCIFLGFHSFGLYIH, and FLVHHIHAFTIHVTVLILV. Residues Cys-574 and Cys-583 each coordinate [4Fe-4S] cluster. The next 2 membrane-spanning stretches (helical) occupy residues 590–611 and 665–687; these read HVFLGLFWMYNSLSVAIFHFSW and LSAYGLIFLAAHFVWAFSLMFLF. Chlorophyll a' is bound at residue His-676. 2 residues coordinate chlorophyll a: Met-684 and Tyr-692. Residue Trp-693 coordinates phylloquinone. Residues 725 to 745 form a helical membrane-spanning segment; that stretch reads AVGVAHYLLGGIGTTWAFFLA.

The protein belongs to the PsaA/PsaB family. In terms of assembly, the PsaA/B heterodimer binds the P700 chlorophyll special pair and subsequent electron acceptors. PSI consists of a core antenna complex that captures photons, and an electron transfer chain that converts photonic excitation into a charge separation. The eukaryotic PSI reaction center is composed of at least 11 subunits. Requires P700 is a chlorophyll a/chlorophyll a' dimer, A0 is one or more chlorophyll a, A1 is one or both phylloquinones and FX is a shared 4Fe-4S iron-sulfur center. as cofactor.

It is found in the plastid. The protein localises to the chloroplast thylakoid membrane. It catalyses the reaction reduced [plastocyanin] + hnu + oxidized [2Fe-2S]-[ferredoxin] = oxidized [plastocyanin] + reduced [2Fe-2S]-[ferredoxin]. Functionally, psaA and PsaB bind P700, the primary electron donor of photosystem I (PSI), as well as the electron acceptors A0, A1 and FX. PSI is a plastocyanin/cytochrome c6-ferredoxin oxidoreductase, converting photonic excitation into a charge separation, which transfers an electron from the donor P700 chlorophyll pair to the spectroscopically characterized acceptors A0, A1, FX, FA and FB in turn. Oxidized P700 is reduced on the lumenal side of the thylakoid membrane by plastocyanin or cytochrome c6. In Pyropia yezoensis (Susabi-nori), this protein is Photosystem I P700 chlorophyll a apoprotein A1.